The primary structure comprises 836 residues: CUB domain-containing protein 1 (836 aa).

The N-terminal stretch at 1–29 is a signal peptide; the sequence is MAGLNCGVSIALLGVLLLGAARLPRGAEA. Topologically, residues 30 to 667 are extracellular; that stretch reads FEIALPRESN…TLTPRTVDLT (638 aa). Residues asparagine 39, asparagine 122, asparagine 180, asparagine 205, asparagine 270, asparagine 310, and asparagine 386 are each glycosylated (N-linked (GlcNAc...) asparagine). Residues 417–544 enclose the CUB domain; it reads CTDHRYCQRK…VSFIPYFKEE (128 aa). Cysteine 476 and cysteine 499 are oxidised to a cystine. A helical membrane pass occupies residues 668 to 688; the sequence is VILIAAVGGGVLLLSALGLII. Residues 689 to 836 are Cytoplasmic-facing; that stretch reads CCVKKKKKKT…NTQEPMEPAE (148 aa). Tyrosine 734 carries the post-translational modification Phosphotyrosine. Residues 776–836 are disordered; sequence PPTICSRAPT…NTQEPMEPAE (61 aa).

In terms of assembly, interacts with CDH2/N-cadherin, CDH3/P-cadherin, SDC1/syndecan-1, SDC4/syndecan-4 and the serine protease ST14/MT-SP1. Also interacts with SRC and PRKCG/protein kinase C gamma. Post-translationally, phosphorylated on tyrosine by kinases of the SRC family such as SRC and YES as well as by the protein kinase C gamma/PRKCG. Dephosphorylated by phosphotyrosine phosphatases. Also phosphorylated by suramin, a heparin analog. Tyrosine phosphorylated in response to dissociation of integrin alpha-6 beta-4 from laminin-5. N-glycosylated. In terms of processing, a soluble form may also be produced by proteolytic cleavage at the cell surface (shedding). Another peptide of 80 kDa (p80) is present in cultured keratinocytes probably due to tryptic cleavage at an unidentified site on its N-terminal side. Converted to p80 by plasmin, a trypsin-like protease. In terms of tissue distribution, highly expressed in mitotic cells with low expression during interphase. Detected at highest levels in skeletal muscle and colon with lower levels in kidney, small intestine, placenta and lung. Up-regulated in a number of human tumor cell lines, as well as in colorectal cancer, breast carcinoma and lung cancer. Also expressed in cells with phenotypes reminiscent of mesenchymal stem cells and neural stem cells.

The protein resides in the cell membrane. Its subcellular location is the secreted. Its function is as follows. May be involved in cell adhesion and cell matrix association. May play a role in the regulation of anchorage versus migration or proliferation versus differentiation via its phosphorylation. May be a novel marker for leukemia diagnosis and for immature hematopoietic stem cell subsets. Belongs to the tetraspanin web involved in tumor progression and metastasis. The sequence is that of CUB domain-containing protein 1 (CDCP1) from Homo sapiens (Human).